We begin with the raw amino-acid sequence, 119 residues long: Small ribosomal subunit protein bS6 (119 aa).

The disordered stretch occupies residues 96–119 (VTEPSPLARSQEKDEEEGGRTAEA).

Belongs to the bacterial ribosomal protein bS6 family.

Its function is as follows. Binds together with bS18 to 16S ribosomal RNA. This chain is Small ribosomal subunit protein bS6, found in Alkalilimnicola ehrlichii (strain ATCC BAA-1101 / DSM 17681 / MLHE-1).